Consider the following 484-residue polypeptide: Fumigaclavine B O-acetyltransferase ifgI (484 aa).

The protein belongs to the fumigaclavine B O-acetyltransferase family. As to quaternary structure, monomer.

It carries out the reaction fumigaclavine B + acetyl-CoA = fumigaclavine A + CoA. It functions in the pathway alkaloid biosynthesis; ergot alkaloid biosynthesis. In terms of biological role, fumigaclavine B O-acetyltransferase; part of the gene cluster that mediates the biosynthesis of isofumigaclavines, fungal ergot alkaloids. The tryptophan dimethylallyltransferase ifgA catalyzes the first step of ergot alkaloid biosynthesis by condensing dimethylallyl diphosphate (DMAP) and tryptophan to form 4-dimethylallyl-L-tryptophan. The second step is catalyzed by the methyltransferase ifgB that methylates 4-dimethylallyl-L-tryptophan in the presence of S-adenosyl-L-methionine, resulting in the formation of N-methyl-dimethylallyl-L-tryptophan. The catalase ifgD and the FAD-dependent oxidoreductase ifgC then transform N-methyl-dimethylallyl-L-tryptophan to chanoclavine-I which is further oxidized by ifgE in the presence of NAD(+), resulting in the formation of chanoclavine-I aldehyde. The chanoclavine-I aldehyde reductases ifgG and/or fgaOx3 reduce chanoclavine-I aldehyde to dihydrochanoclavine-I aldehyde that spontaneously dehydrates to form 6,8-dimethyl-6,7-didehydroergoline. The festuclavine dehydrogenases ifgF1 and/or ifgF2 then catalyze the reduction of 6,8-dimethyl-6,7-didehydroergoline to form festuclavine. Hydrolysis of festuclavine by a yet undetermined cytochrome P450 monooxygenase (called ifgH) then leads to the formation of isofumigaclavine B which is in turn acetylated by ifgI to isofumigaclavine A. Penicillium roqueforti has interestingly at least two sets of genes for the consumption of chanoclavine-I aldehyde on three different loci, the OYEs ifgG/fgaOx3 and the festuclavine synthase homologs ifgF1/ifgF2. The reason for the duplication of these genes is unclear, probably to ensure the conversion of chanoclavine-I aldehyde by differential gene expression under various environmental conditions. This is Fumigaclavine B O-acetyltransferase ifgI from Penicillium roqueforti (strain FM164).